The primary structure comprises 432 residues: MSKIKKILSREILDSRGYPTIETEVHLKTGYFGYSSVPSGASTGSKEALELRDNDKNRFFGKGVKKAVNYVNTEIFQALKNKNAEEQKELDNLMIKLDGTKNKSRFGANAILSVSLSLAKAIALEKNIPFYSYISEINYSKNNFSIPLPMINIINGGMHANNNIDLQEFMIQPIGAKSILQAVQMGSEIFHMLGIILKEKGYSTCVGDEGGYAPNLKSNEEALSMISLAVERSNYKLNEDITFAIDCASSELFNKKTRRYRLKNENKEYNSIEFTHYLEKLTKKYPIRSIEDGQDESDWKGFQYQTKILGKKIQLVGDDLFVTNKKFLEYGIKKKAANSILIKLNQIGTLTETLETIKKAQENKYNVIISHRSGETEDTSIADLAVGTNAGQIKTGSMCRSDRTSKYNRLIKIEESLNTQKKTFKKKLNLFN.

Gln-167 contributes to the (2R)-2-phosphoglycerate binding site. Catalysis depends on Glu-209, which acts as the Proton donor. Mg(2+)-binding residues include Asp-246, Glu-291, and Asp-318. (2R)-2-phosphoglycerate contacts are provided by Lys-343, Arg-372, Ser-373, and Lys-394. The active-site Proton acceptor is the Lys-343.

The protein belongs to the enolase family. Component of the RNA degradosome, a multiprotein complex involved in RNA processing and mRNA degradation. Mg(2+) is required as a cofactor.

Its subcellular location is the cytoplasm. The protein localises to the secreted. It is found in the cell surface. It catalyses the reaction (2R)-2-phosphoglycerate = phosphoenolpyruvate + H2O. Its pathway is carbohydrate degradation; glycolysis; pyruvate from D-glyceraldehyde 3-phosphate: step 4/5. Its function is as follows. Catalyzes the reversible conversion of 2-phosphoglycerate (2-PG) into phosphoenolpyruvate (PEP). It is essential for the degradation of carbohydrates via glycolysis. The protein is Enolase of Buchnera aphidicola subsp. Cinara cedri (strain Cc).